The primary structure comprises 347 residues: N-acetyl-gamma-glutamyl-phosphate reductase (347 aa).

Cys-153 is a catalytic residue.

The protein belongs to the NAGSA dehydrogenase family. Type 1 subfamily.

Its subcellular location is the cytoplasm. It carries out the reaction N-acetyl-L-glutamate 5-semialdehyde + phosphate + NADP(+) = N-acetyl-L-glutamyl 5-phosphate + NADPH + H(+). The protein operates within amino-acid biosynthesis; L-arginine biosynthesis; N(2)-acetyl-L-ornithine from L-glutamate: step 3/4. In terms of biological role, catalyzes the NADPH-dependent reduction of N-acetyl-5-glutamyl phosphate to yield N-acetyl-L-glutamate 5-semialdehyde. In Mycobacterium avium (strain 104), this protein is N-acetyl-gamma-glutamyl-phosphate reductase.